The following is a 441-amino-acid chain: Glutamate-1-semialdehyde 2,1-aminomutase (441 aa).

Lys-273 is subject to N6-(pyridoxal phosphate)lysine.

It belongs to the class-III pyridoxal-phosphate-dependent aminotransferase family. HemL subfamily. Pyridoxal 5'-phosphate is required as a cofactor.

It localises to the cytoplasm. It carries out the reaction (S)-4-amino-5-oxopentanoate = 5-aminolevulinate. Its pathway is porphyrin-containing compound metabolism; protoporphyrin-IX biosynthesis; 5-aminolevulinate from L-glutamyl-tRNA(Glu): step 2/2. This is Glutamate-1-semialdehyde 2,1-aminomutase from Pyrobaculum calidifontis (strain DSM 21063 / JCM 11548 / VA1).